The sequence spans 149 residues: uncharacterized protein (149 aa).

Disordered regions lie at residues 24 to 74 (TSQG…NDLE) and 129 to 149 (AIQD…PRAP). Residues 28-42 (EDVKPEPKPEVDEKV) show a composition bias toward basic and acidic residues. A coiled-coil region spans residues 102–131 (SELESLKEKVSSATSMEELREIMEEFRAIQ).

This is an uncharacterized protein from Archaeoglobus fulgidus (strain ATCC 49558 / DSM 4304 / JCM 9628 / NBRC 100126 / VC-16).